Here is a 1361-residue protein sequence, read N- to C-terminus: MSVVNFYGQLSNTQQFDQIRINIASPEQVRSWSFGEVIKPETINYRTFKPEKDGLFCARIFGPVKDYECLCGKYKRMKNRGITCEKCGVEVTVSRVRRERMGHIELAAPVAHIWFLKSLPSRISTLLDMTMRDIEKILYFENYVVVDPGLSILQKGELLTEEELQKAKDKYGEDAFTASIGAEVVQQMLKELDFPTLKQELYEELQNTTSEVKKKKLVKRLKLVEDFLESENKPEWMIMNVLPVMPPELRPLVMLDGGRFATSDLNELYRRVINRNNRLKKLIESKAPDIIVRNEKRMLQEAVDALFDNGRRGRAAKNANKRPFKSLSDMLKGKQGRFRQNLLGKRVDYSGRSVIVVGPELKLHQCGLPKKMALELFKPFIYSKLELYGIATTIKAAKRMVEAEKPEVWDVLEEVIREHPVLLNRAPTLHRLGIQAFEPLLIEGKAIQLHPLVCAAFNADFDGDQMAVHIPLSIEAQLEARVFMMSTNNILSPANGRPIIVPDKDIVLGLYYLTLAFDHEVGEGMMFSDLTEMEHALYNKFITIHTKIKYRRNQLNAEGKIVPVIVDTTYGRLMVGELLPSNPNIEYKFINKPLTKKDISLVIDLVYRHCGQKATVIFADQLMKLGFKYACSSGISFGMDDMVVPKSKIVHIDETQLEIKEFEQQYSNGLITYGEKYNKVIDAWSRCTDRVANDMMKEIAKPPVSDDSNQQKINSIYMMAISGARGSFQQIKQLGGMRGLMTKSNGQIIPTPIIANFKEGLTVFECFNSANGMRKGQIDTALKTASSGYLTRKLVDVAQDCIITEKDCNTDKGIEVKSIIEGGEVIVPLAEMILGRTAAINIYHPVTNDLILTKGELINESKLEQIESAGLDRIMIKSVLTCESSTGICAICYGRDLATGSLVSEGEAIGVIAAQSIGEPGTQLTMRTFHIGGAATKGAEVSSVEASYDAKVKILSRNVVINSEERKIVMSRNCELLLLDNNGNEKAHSKIPYGARLLVDEGDMVTKTQKLAEWDPYTIPIITEKSGKVLFKDMVEGISVRDVTDEATGIPSKVIIESKQYSRGAELRPRIQLLDAKGEIIMLSNGLEARYYLPVGAVLSVEDGVQISVGDIIARIPKESTTTKDITGGLPRVAELFEARRPKDHAVIAEIDGRVEFGKDYKSKRRIIIHPVDGSMGLEYMVPKGKHVVVNEGDFVKKGDLLIDGNPVLQDILKVMGVELLASYIVKEVQAVYRLQGVKIDDKHIEVIIRQMLQKVEITDSGGTTLLVGEKIDRREFDEINEKAIKNGLRPADAQLILQGITKSSLQTRSFISAASFQETTRVLTEAAIAGKVDKLRGLKENVIVGRLVPAGTGFLYGQNA.

4 residues coordinate Zn(2+): Cys-69, Cys-71, Cys-84, and Cys-87. Mg(2+) contacts are provided by Asp-460, Asp-462, and Asp-464. Zn(2+) is bound by residues Cys-808, Cys-882, Cys-889, and Cys-892.

The protein belongs to the RNA polymerase beta' chain family. The RNAP catalytic core consists of 2 alpha, 1 beta, 1 beta' and 1 omega subunit. When a sigma factor is associated with the core the holoenzyme is formed, which can initiate transcription. It depends on Mg(2+) as a cofactor. The cofactor is Zn(2+).

It carries out the reaction RNA(n) + a ribonucleoside 5'-triphosphate = RNA(n+1) + diphosphate. Functionally, DNA-dependent RNA polymerase catalyzes the transcription of DNA into RNA using the four ribonucleoside triphosphates as substrates. The sequence is that of DNA-directed RNA polymerase subunit beta' from Rickettsia bellii (strain RML369-C).